The chain runs to 369 residues: Chorismate synthase (369 aa).

NADP(+) is bound by residues arginine 48 and arginine 54. Residues 125-127, 238-239, glycine 278, 293-297, and arginine 319 each bind FMN; these read RSS, NA, and KPTSS.

It belongs to the chorismate synthase family. As to quaternary structure, homotetramer. FMNH2 serves as cofactor.

It carries out the reaction 5-O-(1-carboxyvinyl)-3-phosphoshikimate = chorismate + phosphate. It participates in metabolic intermediate biosynthesis; chorismate biosynthesis; chorismate from D-erythrose 4-phosphate and phosphoenolpyruvate: step 7/7. Functionally, catalyzes the anti-1,4-elimination of the C-3 phosphate and the C-6 proR hydrogen from 5-enolpyruvylshikimate-3-phosphate (EPSP) to yield chorismate, which is the branch point compound that serves as the starting substrate for the three terminal pathways of aromatic amino acid biosynthesis. This reaction introduces a second double bond into the aromatic ring system. This chain is Chorismate synthase, found in Burkholderia pseudomallei (strain 1106a).